The chain runs to 441 residues: Polyketide methyltransferase ustM (441 aa).

The methyltransferase (CMeT) domain stretch occupies residues 266–368 (LEVGAGLGGT…VRKLLRGGGF (103 aa)).

It belongs to the methyltransferase superfamily.

The protein operates within secondary metabolite biosynthesis. Functionally, polyketide methyltransferase; part of the gene cluster that mediates the biosynthesis of ustilaginoidins, dimeric gamma-naphthopyrones isolated from different fungal species. The first step in the biosynthesis of ustilaginoidins is the production of gamma-naphthopyrone precursor YWA1 by the non-reducing polyketide synthase ustP, via condensation of one acetyl-CoA starter unit with 6 malonyl-CoA units. YWA1 is then probably substrate of the ustZ to yield norrubrofusarin via a dehydration reaction. A key enzyme in the biosynthetic pathway is the laccase ustL, which catalyzes the oxidative dimerization of norrubrofusarin to ustilaginoidin A. It can produce the M- and P-atropisomers in varying amounts, depending on the reaction conditions. For the biosynthesis of 3-methylustilaginoid in derivatives such as chaetochromin A, a methylated derivative of YWA1 is required. The C-methylation is considered to be catalyzed by ustM, the phosphopantetheine attachment site of which indicates that it acts on the growing polyketide chain before release of the product. For the biosynthesis of chaetochromin A, it is assumed that saturation of the D2 double bond takes place before dimerization, and is probably catalyzed by an external reductase because no candidate gene was identified within the cluster. In Ustilaginoidea virens (Rice false smut fungus), this protein is Polyketide methyltransferase ustM.